An 875-amino-acid chain; its full sequence is Alanine--tRNA ligase (875 aa).

Zn(2+)-binding residues include His-564, His-568, Cys-666, and His-670.

It belongs to the class-II aminoacyl-tRNA synthetase family. As to quaternary structure, homotetramer. It depends on Zn(2+) as a cofactor.

It is found in the cytoplasm. The catalysed reaction is tRNA(Ala) + L-alanine + ATP = L-alanyl-tRNA(Ala) + AMP + diphosphate. Catalyzes the attachment of alanine to tRNA(Ala) in a two-step reaction: alanine is first activated by ATP to form Ala-AMP and then transferred to the acceptor end of tRNA(Ala). Also edits incorrectly charged Ser-tRNA(Ala) and Gly-tRNA(Ala) via its editing domain. The protein is Alanine--tRNA ligase of Serratia proteamaculans (strain 568).